The sequence spans 454 residues: Phosphoglucosamine mutase (454 aa).

The Phosphoserine intermediate role is filled by Ser-104. Ser-104, Asp-241, Asp-243, and Asp-245 together coordinate Mg(2+). Ser-104 bears the Phosphoserine mark.

It belongs to the phosphohexose mutase family. Requires Mg(2+) as cofactor. Activated by phosphorylation.

It carries out the reaction alpha-D-glucosamine 1-phosphate = D-glucosamine 6-phosphate. Catalyzes the conversion of glucosamine-6-phosphate to glucosamine-1-phosphate. This is Phosphoglucosamine mutase from Paenarthrobacter aurescens (strain TC1).